Reading from the N-terminus, the 383-residue chain is uncharacterized protein (383 aa).

Cysteine 12, cysteine 18, cysteine 21, and cysteine 88 together coordinate [4Fe-4S] cluster. Positions 219, 246, 267, and 314 each coordinate S-adenosyl-L-methionine. Cysteine 341 acts as the Nucleophile in catalysis.

The protein belongs to the class I-like SAM-binding methyltransferase superfamily. RNA M5U methyltransferase family.

This is an uncharacterized protein from Protochlamydia amoebophila (strain UWE25).